The primary structure comprises 379 residues: Cytochrome b (379 aa).

Transmembrane regions (helical) follow at residues 33 to 53 (FGSL…FLAM), 77 to 98 (WLIR…FIHV), 113 to 133 (WNIG…GYVL), and 178 to 198 (FFAF…VHLL). Residues H83 and H97 each coordinate heme b. The heme b site is built by H182 and H196. Residue H201 coordinates a ubiquinone. Helical transmembrane passes span 226 to 246 (IKDL…ALFF), 288 to 308 (LGGV…PLLN), 320 to 340 (ITQT…WIGG), and 347 to 367 (FTMI…ILXP).

The protein belongs to the cytochrome b family. As to quaternary structure, the cytochrome bc1 complex contains 11 subunits: 3 respiratory subunits (MT-CYB, CYC1 and UQCRFS1), 2 core proteins (UQCRC1 and UQCRC2) and 6 low-molecular weight proteins (UQCRH/QCR6, UQCRB/QCR7, UQCRQ/QCR8, UQCR10/QCR9, UQCR11/QCR10 and a cleavage product of UQCRFS1). This cytochrome bc1 complex then forms a dimer. Requires heme b as cofactor.

The protein resides in the mitochondrion inner membrane. Its function is as follows. Component of the ubiquinol-cytochrome c reductase complex (complex III or cytochrome b-c1 complex) that is part of the mitochondrial respiratory chain. The b-c1 complex mediates electron transfer from ubiquinol to cytochrome c. Contributes to the generation of a proton gradient across the mitochondrial membrane that is then used for ATP synthesis. In Akodon toba (Chaco grass mouse), this protein is Cytochrome b (MT-CYB).